A 70-amino-acid polypeptide reads, in one-letter code: ATP synthase subunit c (70 aa).

2 helical membrane-spanning segments follow: residues 4-24 and 47-67; these read IAAG…DGIV and FIGV…ALMV.

This sequence belongs to the ATPase C chain family. F-type ATPases have 2 components, F(1) - the catalytic core - and F(0) - the membrane proton channel. F(1) has five subunits: alpha(3), beta(3), gamma(1), delta(1), epsilon(1). F(0) has three main subunits: a(1), b(2) and c(10-14). The alpha and beta chains form an alternating ring which encloses part of the gamma chain. F(1) is attached to F(0) by a central stalk formed by the gamma and epsilon chains, while a peripheral stalk is formed by the delta and b chains.

The protein resides in the cell membrane. Functionally, f(1)F(0) ATP synthase produces ATP from ADP in the presence of a proton or sodium gradient. F-type ATPases consist of two structural domains, F(1) containing the extramembraneous catalytic core and F(0) containing the membrane proton channel, linked together by a central stalk and a peripheral stalk. During catalysis, ATP synthesis in the catalytic domain of F(1) is coupled via a rotary mechanism of the central stalk subunits to proton translocation. In terms of biological role, key component of the F(0) channel; it plays a direct role in translocation across the membrane. A homomeric c-ring of between 10-14 subunits forms the central stalk rotor element with the F(1) delta and epsilon subunits. This is ATP synthase subunit c from Levilactobacillus brevis (strain ATCC 367 / BCRC 12310 / CIP 105137 / JCM 1170 / LMG 11437 / NCIMB 947 / NCTC 947) (Lactobacillus brevis).